Here is a 1092-residue protein sequence, read N- to C-terminus: Fibrinogen-binding protein (1092 aa).

Residues 1–51 (MINKKNNLLTKKKPIANKSNKYAIRKFTVGTASIVIGATLLFGLGHNEAKA) form the signal peptide. A compositionally biased stretch (basic and acidic residues) spans 50–63 (KAEENSVQDVKDSN). Residues 50 to 236 (KAEENSVQDV…GYTNIDEKIS (187 aa)) form a disordered region. The tract at residues 52-599 (EENSVQDVKD…GQGQGDLPPE (548 aa)) is ligand binding A region. Positions 64–76 (TDDELSDSNDQSS) are enriched in acidic residues. Residues 84–98 (INNNQSINTDDNNQI) show a composition bias toward low complexity. The segment covering 99 to 119 (IKKEETNNYDGIEKRSEDRTE) has biased composition (basic and acidic residues). Residues 120–140 (STTNVDENEATFLQKTPQDNT) show a composition bias toward polar residues. Basic and acidic residues predominate over residues 141-151 (HLTEEEVKESS). Residues 160–170 (IDTAQQPSHTT) are compositionally biased toward polar residues. Residues 195–220 (KIKESNTESGKEENTIEQPNKVKEDS) are compositionally biased toward basic and acidic residues. Ca(2+)-binding residues include Glu-294, Ser-299, Val-302, and Glu-309. Residues 579–590 (YDNTIAFSTSSG) are interaction with human fibrinogen. CNA-B domains are found at residues 600–713 (KTYK…YQTP) and 714–824 (KYSL…YDDE). The disordered stretch occupies residues 780 to 1068 (KPSGMTQTTT…NEDYGSKGTL (289 aa)). Over residues 791–801 (SGDDDEQDADG) the composition is skewed to acidic residues. Over residues 802–814 (EEVHVTITDHDDF) the composition is skewed to basic and acidic residues. Positions 820-1039 (YYDDESDSDS…DSDSDSDNDS (220 aa)) are enriched in acidic residues. The short motif at 1053-1057 (LPDTG) is the LPXTG sorting signal element. The residue at position 1056 (Thr-1056) is a Pentaglycyl murein peptidoglycan amidated threonine. Positions 1057–1092 (GANEDYGSKGTLLGTLFAGLGALLLGKRRKNRKNKN) are cleaved as a propeptide — removed by sortase.

Belongs to the serine-aspartate repeat-containing protein (SDr) family.

Its subcellular location is the secreted. The protein resides in the cell wall. In terms of biological role, promotes bacterial attachment to both soluble and immobilized forms of fibrinogen in a dose-dependent manner. This binding occurs through the beta-chain of human fibrinogen. Could contribute to the initiation of foreign-body infection by allowing bacteria to adhere to biomaterial surfaces that have become coated with host proteins after implantation. Is important in the pathogenesis of central venous catheter (CVC)-associated infection model. This Staphylococcus epidermidis protein is Fibrinogen-binding protein (fbe).